The sequence spans 146 residues: VEWTDQERATISSIFGSLDYDDIGPKALSRCLIVYPWTQRHFGSFGNLYNAEAIIGNQKVAAHGIKVLHGLDRAVKNMDNIKEIYAELSILHSEKLHVDPDNFKLLADCLTIVVAAKMGSGFNPGTQATFQKFLAVVVSALGKQYH.

A Globin domain is found at 2 to 146; sequence EWTDQERATI…VVSALGKQYH (145 aa). 2 residues coordinate heme b: His63 and His92.

Belongs to the globin family. Hb1 is a heterotetramer of two alpha-1 chains and two beta-1 chains. Hb2 is a heterotetramer of two alpha-2 chains and two beta-1 chains. HbC is a heterotetramer of two alpha-1 chains and two beta-2 chains. As to expression, red blood cells.

Functionally, involved in oxygen transport from gills to the various peripheral tissues. This Eleginops maclovinus (Patagonian blennie) protein is Hemoglobin subunit beta-1.